Here is a 1130-residue protein sequence, read N- to C-terminus: Alpha-mannosidase 2 (1130 aa).

Residues 1-14 (MRTRVLRCRPFSTR) are Cytoplasmic-facing. A helical; Signal-anchor for type II membrane protein membrane pass occupies residues 15-35 (ILLLLLFVLAFGVYCYFYNAS). At 36–1130 (PQNYNKPRIS…MEVKTYKIRF (1095 aa)) the chain is on the lumenal side. Asn-117 carries an N-linked (GlcNAc...) asparagine glycan. The Zn(2+) site is built by His-133 and Asp-135. Asn-166 carries N-linked (GlcNAc...) asparagine glycosylation. Residues Asp-247 and His-527 each contribute to the Zn(2+) site. The active-site Nucleophile is the Asp-247. Residues Asn-622, Asn-683, Asn-1056, and Asn-1095 are each glycosylated (N-linked (GlcNAc...) asparagine).

It belongs to the glycosyl hydrolase 38 family. Homodimer; disulfide-linked. Zn(2+) serves as cofactor. Post-translationally, N-glycosylated.

The protein resides in the microsome membrane. It localises to the golgi apparatus membrane. It carries out the reaction N(4)-{beta-D-GlcNAc-(1-&gt;2)-alpha-D-Man-(1-&gt;3)-[alpha-D-Man-(1-&gt;3)-[alpha-D-Man-(1-&gt;6)]-alpha-D-Man-(1-&gt;6)]-beta-D-Man-(1-&gt;4)-beta-D-GlcNAc-(1-&gt;4)-beta-D-GlcNAc}-L-asparaginyl-[protein] + 2 H2O = 2 alpha-D-mannopyranose + an N(4)-{beta-D-GlcNAc-(1-&gt;2)-alpha-D-Man-(1-&gt;3)-[alpha-D-Man-(1-&gt;6)]-beta-D-Man-(1-&gt;4)-beta-D-GlcNAc-(1-&gt;4)-beta-D-GlcNAc}-L-asparaginyl-[protein]. It participates in protein modification; protein glycosylation. Inhibited by swainsonine. Catalyzes the first committed step in the biosynthesis of complex N-glycans. It controls conversion of high mannose to complex N-glycans; the final hydrolytic step in the N-glycan maturation pathway. The polypeptide is Alpha-mannosidase 2 (Spodoptera frugiperda (Fall armyworm)).